The chain runs to 453 residues: uncharacterized protein (453 aa).

2 disordered regions span residues Gly183–Ser210 and Pro428–Lys453. A compositionally biased stretch (basic residues) spans Thr198 to Arg207. Residues His433–Lys453 show a composition bias toward polar residues.

This is an uncharacterized protein from Saccharomyces cerevisiae (strain ATCC 204508 / S288c) (Baker's yeast).